The primary structure comprises 64 residues: Putative H/ACA ribonucleoprotein complex subunit 3 (64 aa).

The protein belongs to the NOP10 family. Component of the small nucleolar ribonucleoprotein particles containing H/ACA-type snoRNAs (H/ACA snoRNPs).

Its subcellular location is the nucleus. It is found in the nucleolus. Functionally, required for ribosome biogenesis. Part of a complex which catalyzes pseudouridylation of rRNA. This involves the isomerization of uridine such that the ribose is subsequently attached to C5, instead of the normal N1. Pseudouridine ('psi') residues may serve to stabilize the conformation of rRNAs. In Caenorhabditis elegans, this protein is Putative H/ACA ribonucleoprotein complex subunit 3 (nola-3).